Reading from the N-terminus, the 151-residue chain is MGRMHAPGKGLSQSALPYRRSVPTWLKLTSDDVKEQIYKLAKKGLTPSQIGVILRDSHGVAQVRFVTGNKILRILKSKGLAPDLPEDLYHLIKKAVAVRKHLERNRKDKDAKFRLILIESRIHRLARYYKTKRVLPPNWKYESSTASALVA.

Position 27 is an N6-acetyllysine; alternate (Lys27). Lys27 is subject to N6-succinyllysine; alternate. Lys27 participates in a covalent cross-link: Glycyl lysine isopeptide (Lys-Gly) (interchain with G-Cter in ubiquitin). Phosphoserine is present on Ser30. Lys34 carries the post-translational modification N6-succinyllysine. Tyr38 is subject to Phosphotyrosine. A Glycyl lysine isopeptide (Lys-Gly) (interchain with G-Cter in SUMO2) cross-link involves residue Lys43.

The protein belongs to the universal ribosomal protein uS15 family. As to quaternary structure, component of the small ribosomal subunit. Part of the small subunit (SSU) processome, composed of more than 70 proteins and the RNA chaperone small nucleolar RNA (snoRNA) U3. Ubiquitinated at Lys-27 by RNF14 and RNF25 in response to ribosome collisions (ribosome stalling).

The protein resides in the cytoplasm. Its subcellular location is the nucleus. It is found in the nucleolus. Component of the small ribosomal subunit. The ribosome is a large ribonucleoprotein complex responsible for the synthesis of proteins in the cell. Part of the small subunit (SSU) processome, first precursor of the small eukaryotic ribosomal subunit. During the assembly of the SSU processome in the nucleolus, many ribosome biogenesis factors, an RNA chaperone and ribosomal proteins associate with the nascent pre-rRNA and work in concert to generate RNA folding, modifications, rearrangements and cleavage as well as targeted degradation of pre-ribosomal RNA by the RNA exosome. This chain is Small ribosomal subunit protein uS15, found in Homo sapiens (Human).